Consider the following 396-residue polypeptide: Peroxisome proliferator-activated receptor delta (396 aa).

The interval 1-24 (MKEEIPPRSPILDEQPSTPLEHQE) is disordered. Residues 15 to 24 (QPSTPLEHQE) are compositionally biased toward polar residues. The segment at residues 28 to 102 (SVDCKICGDR…LGMSHNAIRF (75 aa)) is a DNA-binding region (nuclear receptor). 2 NR C4-type zinc fingers span residues 31–51 (CKIC…CEGC) and 68–90 (CDRN…FNKC). An NR LBD domain is found at 166–394 (FVIHDMDTLW…HPLLQEIYRD (229 aa)).

Belongs to the nuclear hormone receptor family. NR1 subfamily. Heterodimer with the retinoid X receptor. In terms of processing, 'Lys-48'-linked polyubiquitinated; leading to proteasomal degradation. Deubiquitinated and stabilized by OTUD3. In terms of tissue distribution, ubiquitous.

It localises to the nucleus. In terms of biological role, ligand-activated transcription factor key mediator of energy metabolism in adipose tissues. Receptor that binds peroxisome proliferators such as hypolipidemic drugs and fatty acids. Has a preference for poly-unsaturated fatty acids, such as gamma-linoleic acid and eicosapentanoic acid. Once activated by a ligand, the receptor binds to promoter elements of target genes. Regulates the peroxisomal beta-oxidation pathway of fatty acids. Functions as a transcription activator for the acyl-CoA oxidase gene. Decreases expression of NPC1L1 once activated by a ligand. This chain is Peroxisome proliferator-activated receptor delta (ppard), found in Xenopus laevis (African clawed frog).